The sequence spans 215 residues: Thiamine import ATP-binding protein ThiQ (215 aa).

Positions 2 to 215 (IYLNNVILND…GQISQLQKGV (214 aa)) constitute an ABC transporter domain. 32–39 (GESGAGKS) contacts ATP.

This sequence belongs to the ABC transporter superfamily. Thiamine importer (TC 3.A.1.19.1) family. As to quaternary structure, the complex is composed of two ATP-binding proteins (ThiQ), two transmembrane proteins (ThiP) and a solute-binding protein (ThiB).

It is found in the cell inner membrane. The enzyme catalyses thiamine(out) + ATP + H2O = thiamine(in) + ADP + phosphate + H(+). Its function is as follows. Part of the ABC transporter complex ThiBPQ involved in thiamine import. Responsible for energy coupling to the transport system. The chain is Thiamine import ATP-binding protein ThiQ from Haemophilus influenzae (strain ATCC 51907 / DSM 11121 / KW20 / Rd).